Here is a 162-residue protein sequence, read N- to C-terminus: Caveolin-2 (162 aa).

Over 1–86 (MGLEKEKLEC…FELVKFIFYR (86 aa)) the chain is Cytoplasmic. The helical intramembrane region spans 87–107 (LLTTLLAVPAAFILGVVFGVL). The Cytoplasmic portion of the chain corresponds to 108–162 (SCIHIWLVMPVTRSFLMLLPSIQVVWKSVTDMFITPLFHSMGRSLSSIQVRTSDT).

The protein belongs to the caveolin family. Homooligomer.

It is found in the golgi apparatus membrane. The protein localises to the cell membrane. It localises to the membrane. Its subcellular location is the caveola. Its function is as follows. May act as a scaffolding protein within caveolar membranes. Interacts directly with G-protein alpha subunits and can functionally regulate their activity. The sequence is that of Caveolin-2 (cav2) from Takifugu rubripes (Japanese pufferfish).